A 260-amino-acid chain; its full sequence is Sphinganine C4-monooxygenase 1 (260 aa).

3 helical membrane-spanning segments follow: residues 11–31 (LLGTVAPIVVYWLYSGIYVAL), 55–75 (SVVKGVLVQQVVQAVVAILLF), and 92–112 (FLVLARQFVTAMIVLDTWQYF). The region spanning 99–235 (FVTAMIVLDT…FVMWDRILGT (137 aa)) is the Fatty acid hydroxylase domain. The Histidine box-1 motif lies at 114 to 118 (HRYMH). The Histidine box-2 signature appears at 128 to 132 (HSQHH). A Histidine box-3 motif is present at residues 207 to 213 (YHDIHHQ).

Belongs to the sterol desaturase family. Requires Fe cation as cofactor. As to expression, ubiquitous, with higher levels in flowers and roots.

The protein resides in the endoplasmic reticulum membrane. The catalysed reaction is a dihydroceramide + 2 Fe(II)-[cytochrome b5] + O2 + 2 H(+) = a phytoceramide + 2 Fe(III)-[cytochrome b5] + H2O. It participates in membrane lipid metabolism; sphingolipid biosynthesis. Functionally, involved in sphingolipid trihydroxy long-chain base (4-hydroxysphinganine) biosynthesis. Can use C18- and C20-sphinganine as substrates to produce C18- and C20-phytosphinganines (D-ribo-2-amino-1,3,4-trihydroxyoctadecane and -eicosane). This is Sphinganine C4-monooxygenase 1 (SBH1) from Arabidopsis thaliana (Mouse-ear cress).